Consider the following 425-residue polypeptide: Dihydroorotase (425 aa).

The Zn(2+) site is built by His56 and His58. Residues 58 to 60 and Asn90 contribute to the substrate site; that span reads HYR. 3 residues coordinate Zn(2+): Asp148, His175, and His228. Asn274 is a binding site for substrate. Asp301 contributes to the Zn(2+) binding site. Asp301 is a catalytic residue. Residues His305 and 319–320 contribute to the substrate site; that span reads FG.

This sequence belongs to the metallo-dependent hydrolases superfamily. DHOase family. Class I DHOase subfamily. Zn(2+) serves as cofactor.

The enzyme catalyses (S)-dihydroorotate + H2O = N-carbamoyl-L-aspartate + H(+). It participates in pyrimidine metabolism; UMP biosynthesis via de novo pathway; (S)-dihydroorotate from bicarbonate: step 3/3. Functionally, catalyzes the reversible cyclization of carbamoyl aspartate to dihydroorotate. The chain is Dihydroorotase from Lactobacillus helveticus (strain DPC 4571).